A 182-amino-acid polypeptide reads, in one-letter code: Oligoribonuclease (182 aa).

An Exonuclease domain is found at 8 to 171 (LIWIDLEMTG…DDIRESIKEL (164 aa)). The active site involves Y129.

This sequence belongs to the oligoribonuclease family.

It localises to the cytoplasm. Functionally, 3'-to-5' exoribonuclease specific for small oligoribonucleotides. The polypeptide is Oligoribonuclease (Haemophilus influenzae (strain PittGG)).